The primary structure comprises 275 residues: Large ribosomal subunit protein uL2 (275 aa).

A disordered region spans residues 210-275 (GRNRHRGIRP…DKLIISRKKK (66 aa)). A compositionally biased stretch (basic residues) spans 257–275 (FKTRKKKASDKLIISRKKK).

The protein belongs to the universal ribosomal protein uL2 family. Part of the 50S ribosomal subunit. Forms a bridge to the 30S subunit in the 70S ribosome.

In terms of biological role, one of the primary rRNA binding proteins. Required for association of the 30S and 50S subunits to form the 70S ribosome, for tRNA binding and peptide bond formation. It has been suggested to have peptidyltransferase activity; this is somewhat controversial. Makes several contacts with the 16S rRNA in the 70S ribosome. The protein is Large ribosomal subunit protein uL2 of Helicobacter hepaticus (strain ATCC 51449 / 3B1).